Reading from the N-terminus, the 470-residue chain is 6-phospho-beta-galactosidase (470 aa).

5 residues coordinate D-galactose 6-phosphate: Q19, H116, N159, E160, and N297. The active-site Proton donor is the E160. The active-site Nucleophile is E375. D-galactose 6-phosphate is bound by residues S430, W431, K437, and Y439.

This sequence belongs to the glycosyl hydrolase 1 family.

The enzyme catalyses a 6-phospho-beta-D-galactoside + H2O = D-galactose 6-phosphate + an alcohol. Its pathway is carbohydrate metabolism; lactose degradation; D-galactose 6-phosphate and beta-D-glucose from lactose 6-phosphate: step 1/1. This chain is 6-phospho-beta-galactosidase, found in Staphylococcus aureus (strain MRSA252).